Reading from the N-terminus, the 130-residue chain is Fumarate reductase subunit C (130 aa).

3 helical membrane-spanning segments follow: residues 34 to 54, 60 to 80, and 109 to 129; these read VPAVWFSIVLIYGVFALKGGV, FVGFLQNPLVLLINFVALLAA, and IVKTLWAVTVVASVVILAVAL.

It belongs to the FrdC family. Part of an enzyme complex containing four subunits: a flavoprotein (FrdA), an iron-sulfur protein (FrdB), and two hydrophobic anchor proteins (FrdC and FrdD).

The protein localises to the cell inner membrane. Functionally, two distinct, membrane-bound, FAD-containing enzymes are responsible for the catalysis of fumarate and succinate interconversion; fumarate reductase is used in anaerobic growth, and succinate dehydrogenase is used in aerobic growth. Anchors the catalytic components of the fumarate reductase complex to the cell inner membrane, binds quinones. The chain is Fumarate reductase subunit C from Serratia proteamaculans (strain 568).